Consider the following 479-residue polypeptide: Beta-monoglucosyldiacylglycerol synthase (479 aa).

A run of 4 helical transmembrane segments spans residues 48 to 68 (AAVMLMAIWTVVITLHYWVWG), 363 to 383 (FLLMQYLLPTAAVPDLLMALW), 389 to 409 (LLTPLSYLAIGFSCWGMYYGL), and 428 to 448 (LARTIGGTIYMFHWLIIMPAV).

This sequence belongs to the glycosyltransferase 2 family. Requires Mg(2+) as cofactor.

Its subcellular location is the membrane. The catalysed reaction is a 1,2-diacyl-sn-glycerol + UDP-alpha-D-glucose = a 1,2-diacyl-3-O-(beta-D-glucopyranosyl)-sn-glycerol + UDP + H(+). Its function is as follows. Glucosyltransferase involved in the biosynthesis of the non-bilayer-forming membrane lipid beta-monoglucosyldiacylglycerol which contributes to regulate the properties and stability of the membrane. Catalyzes the transfer of a glucosyl residue from UDP-Glc to diacylglycerol (DAG) acceptor to form the corresponding beta-glucosyl-DAG (1,2-diacyl-3-O-(beta-D-glucopyranosyl)-sn-glycerol). It can only use UDP-Glc as sugar donor. Two types of DAG (dipalmitoyl-DAG (DPDAG) and 1-oleoyl-2-palmitoyl-DAG (OPDAG)) can be used as sugar acceptors, but OPDAG is preferred. The chain is Beta-monoglucosyldiacylglycerol synthase from Synechocystis sp. (strain ATCC 27184 / PCC 6803 / Kazusa).